We begin with the raw amino-acid sequence, 352 residues long: Keratocan (352 aa).

Residues 1–20 (MAGTICFIMWVLFITDTVWS) form the signal peptide. Positions 33-71 (DDWTIHDFECPMECFCPPSFPTALYCENRGLKEIPAIPS) constitute an LRRNT domain. 2 disulfides stabilise this stretch: Cys-42–Cys-48 and Cys-46–Cys-58. LRR repeat units lie at residues 72–93 (RIWY…PFEN), 96–117 (QLRW…KGAL), 122–142 (KLLF…PLPR), 143–164 (SLEQ…TFSN), 167–180 (NLTL…KLVD), 193–213 (NLMQ…RLPA), 214–235 (NTMQ…YFNV), 238–258 (KVAF…PSRG), 263–282 (SILD…RISA), and 283–304 (HLQH…VICP). Asn-93 is a glycosylation site (N-linked (GlcNAc...) (keratan sulfate) asparagine). N-linked (GlcNAc...) (keratan sulfate) asparagine glycosylation is present at Asn-167. N-linked (GlcNAc...) asparagine glycosylation is present at Asn-222. A glycan (N-linked (GlcNAc...) asparagine) is linked at Asn-298. Cys-303 and Cys-343 form a disulfide bridge.

Belongs to the small leucine-rich proteoglycan (SLRP) family. SLRP class II subfamily. Binds keratan sulfate chains. Cornea (at protein level). Increased expression in the stroma of keratoconus corneas. Also detected in trachea, and in low levels, in intestine, skeletal muscle, ovary, lung and putamen.

The protein localises to the secreted. It localises to the extracellular space. The protein resides in the extracellular matrix. In terms of biological role, may be important in developing and maintaining corneal transparency and for the structure of the stromal matrix. The sequence is that of Keratocan (KERA) from Homo sapiens (Human).